Here is a 227-residue protein sequence, read N- to C-terminus: Cytochrome c oxidase subunit 2 (227 aa).

Over 1–14 the chain is Mitochondrial intermembrane; it reads MAYPFQLGFQDASS. A helical membrane pass occupies residues 15-45; it reads PIMEELLHFHDHTLMIVFLISSLVLYIISLM. Residues 46-59 lie on the Mitochondrial matrix side of the membrane; that stretch reads LTTKLTHTSTMDAQ. A helical transmembrane segment spans residues 60-87; that stretch reads EVETIWTILPAIILILIALPSLRILYMM. The Mitochondrial intermembrane segment spans residues 88-227; it reads DEINNPSLTV…HFENWSLSMI (140 aa). Residues His161, Cys196, Glu198, Cys200, His204, and Met207 each contribute to the Cu cation site. Mg(2+) is bound at residue Glu198.

This sequence belongs to the cytochrome c oxidase subunit 2 family. Component of the cytochrome c oxidase (complex IV, CIV), a multisubunit enzyme composed of 14 subunits. The complex is composed of a catalytic core of 3 subunits MT-CO1, MT-CO2 and MT-CO3, encoded in the mitochondrial DNA, and 11 supernumerary subunits COX4I, COX5A, COX5B, COX6A, COX6B, COX6C, COX7A, COX7B, COX7C, COX8 and NDUFA4, which are encoded in the nuclear genome. The complex exists as a monomer or a dimer and forms supercomplexes (SCs) in the inner mitochondrial membrane with NADH-ubiquinone oxidoreductase (complex I, CI) and ubiquinol-cytochrome c oxidoreductase (cytochrome b-c1 complex, complex III, CIII), resulting in different assemblies (supercomplex SCI(1)III(2)IV(1) and megacomplex MCI(2)III(2)IV(2)). Found in a complex with TMEM177, COA6, COX18, COX20, SCO1 and SCO2. Interacts with TMEM177 in a COX20-dependent manner. Interacts with COX20. Interacts with COX16. Cu cation is required as a cofactor.

Its subcellular location is the mitochondrion inner membrane. The catalysed reaction is 4 Fe(II)-[cytochrome c] + O2 + 8 H(+)(in) = 4 Fe(III)-[cytochrome c] + 2 H2O + 4 H(+)(out). In terms of biological role, component of the cytochrome c oxidase, the last enzyme in the mitochondrial electron transport chain which drives oxidative phosphorylation. The respiratory chain contains 3 multisubunit complexes succinate dehydrogenase (complex II, CII), ubiquinol-cytochrome c oxidoreductase (cytochrome b-c1 complex, complex III, CIII) and cytochrome c oxidase (complex IV, CIV), that cooperate to transfer electrons derived from NADH and succinate to molecular oxygen, creating an electrochemical gradient over the inner membrane that drives transmembrane transport and the ATP synthase. Cytochrome c oxidase is the component of the respiratory chain that catalyzes the reduction of oxygen to water. Electrons originating from reduced cytochrome c in the intermembrane space (IMS) are transferred via the dinuclear copper A center (CU(A)) of subunit 2 and heme A of subunit 1 to the active site in subunit 1, a binuclear center (BNC) formed by heme A3 and copper B (CU(B)). The BNC reduces molecular oxygen to 2 water molecules using 4 electrons from cytochrome c in the IMS and 4 protons from the mitochondrial matrix. The sequence is that of Cytochrome c oxidase subunit 2 (MT-CO2) from Oryctolagus cuniculus (Rabbit).